A 1276-amino-acid polypeptide reads, in one-letter code: Component of gems protein 5 (1276 aa).

The interval 53–55 is interaction with U4 snRNA; sequence NWY. 8 WD repeats span residues 92 to 139, 183 to 223, 228 to 268, 271 to 336, 364 to 405, 438 to 481, 485 to 522, and 530 to 574; these read GHTD…DDHN, EHKA…VFPI, GNNI…TVCK, AHSA…IESG, NDKQ…SPPE, TTKN…IKIQ, GFVYSIDTCSYSPNTFAIGCGDNTIRLWSPTENSKDAY, and GIQS…SKIF. The interval 138-157 is disordered; the sequence is HNEDTEIGDDFKHGSGGGGS. The segment at 586 to 652 is disordered; the sequence is IWKPPPTPTP…NSNNEQQPNK (67 aa). Low complexity predominate over residues 598 to 646; sequence NINNNNNNNNNNNNNNNNNNNNNNNNNNNNNNNNNNNNINNNNNNNSNN. WD repeat units follow at residues 688–727 and 729–771; these read TFSKHKTDINFNLNGDMISIGYSDGTIDIFTSEFLFLTRI and EHKK…NQNE. Over residues 772–793 the composition is skewed to basic and acidic residues; the sequence is NEKKIDNEKGKENENEKGKENE. The segment at 772–809 is disordered; it reads NEKKIDNEKGKENENEKGKENENENENENENENENENE. Positions 778–829 form a coiled coil; it reads NEKGKENENEKGKENENENENENENENENENENEIENIVNNNNENDTEIEIK. The span at 794–809 shows a compositional bias: acidic residues; sequence NENENENENENENENE. 2 WD repeats span residues 863-903 and 906-946; these read GHKN…AISN and GHDG…FKTV. A disordered region spans residues 967-997; sequence ITEQQQQQQQPQSPIKSNPDQSNNPSLVPPI. The span at 979 to 992 shows a compositional bias: polar residues; sequence SPIKSNPDQSNNPS.

This sequence belongs to the WD repeat gemin-5 family. Part of the core SMN complex.

The protein localises to the nucleus. Its subcellular location is the nucleoplasm. The protein resides in the gem. It localises to the cytoplasm. Its function is as follows. The SMN complex catalyzes the assembly of small nuclear ribonucleoproteins (snRNPs), the building blocks of the spliceosome, and thereby plays an important role in the splicing of cellular pre-mRNAs. Most spliceosomal snRNPs contain a common set of Sm proteins SNRPB, SNRPD1, SNRPD2, SNRPD3, SNRPE, SNRPF and SNRPG that assemble in a heptameric protein ring on the Sm site of the small nuclear RNA to form the core snRNP (Sm core). In the cytosol, the Sm proteins SNRPD1, SNRPD2, SNRPE, SNRPF and SNRPG are trapped in an inactive 6S pICln-Sm complex by the chaperone CLNS1A that controls the assembly of the core snRNP. To assemble core snRNPs, the SMN complex accepts the trapped 5Sm proteins from CLNS1A forming an intermediate. Binding of snRNA inside 5Sm ultimately triggers eviction of the SMN complex, thereby allowing binding of SNRPD3 and SNRPB to complete assembly of the core snRNP. Within the SMN complex, GEMIN5 recognizes and delivers the small nuclear RNAs (snRNAs) to the SMN complex. Binds to the 7-methylguanosine cap of RNA molecules. The polypeptide is Component of gems protein 5 (gemin5) (Dictyostelium discoideum (Social amoeba)).